A 311-amino-acid polypeptide reads, in one-letter code: 2-dehydro-3-deoxygluconokinase (311 aa).

Substrate is bound by residues 34 to 35 (GS), 106 to 108 (YYR), and Arg-166. Residues 164–166 (NIR), 224–229 (KLGPKG), 253–256 (GAGD), and Ser-283 each bind ATP. Substrate-binding residues include Gly-253 and Asp-256. The Proton acceptor role is filled by Asp-256. Residue Asp-292 coordinates substrate.

This sequence belongs to the carbohydrate kinase PfkB family. As to quaternary structure, homotetramer. A divalent metal cation serves as cofactor.

It carries out the reaction 2-dehydro-3-deoxy-D-gluconate + ATP = 2-dehydro-3-deoxy-6-phospho-D-gluconate + ADP + H(+). The protein operates within carbohydrate acid metabolism; 2-dehydro-3-deoxy-D-gluconate degradation; D-glyceraldehyde 3-phosphate and pyruvate from 2-dehydro-3-deoxy-D-gluconate: step 1/2. Functionally, involved in the degradation of glucose via the semi-phosphorylative Entner-Doudoroff pathway. Catalyzes the phosphorylation of 2-keto-3-deoxygluconate (KDG) to produce 2-keto-3-deoxy-6-phosphogluconate (KDPG). Can also use GTP, but not ADP or AMP, as a phosphoryl donor and 2-keto-D-gluconate (KG) as a phosphoryl acceptor. This is 2-dehydro-3-deoxygluconokinase from Sulfurisphaera tokodaii (strain DSM 16993 / JCM 10545 / NBRC 100140 / 7) (Sulfolobus tokodaii).